The sequence spans 294 residues: Large ribosomal subunit protein uL18 (294 aa).

Residues 247–275 form a disordered region; sequence RADPSPSAKKAAKPSKRHTAKRLTYDERK. The span at 256–267 shows a compositional bias: basic residues; the sequence is KAAKPSKRHTAK.

The protein belongs to the universal ribosomal protein uL18 family. In terms of assembly, component of the large ribosomal subunit (LSU).

The protein resides in the cytoplasm. It localises to the nucleus. In terms of biological role, component of the ribosome, a large ribonucleoprotein complex responsible for the synthesis of proteins in the cell. The small ribosomal subunit (SSU) binds messenger RNAs (mRNAs) and translates the encoded message by selecting cognate aminoacyl-transfer RNA (tRNA) molecules. The large subunit (LSU) contains the ribosomal catalytic site termed the peptidyl transferase center (PTC), which catalyzes the formation of peptide bonds, thereby polymerizing the amino acids delivered by tRNAs into a polypeptide chain. The nascent polypeptides leave the ribosome through a tunnel in the LSU and interact with protein factors that function in enzymatic processing, targeting, and the membrane insertion of nascent chains at the exit of the ribosomal tunnel. In Caenorhabditis briggsae, this protein is Large ribosomal subunit protein uL18 (rpl-5).